Consider the following 477-residue polypeptide: Ankyrin repeat, SAM and basic leucine zipper domain-containing protein 1 (477 aa).

The tract at residues 1–24 (MATSALRGLAVAGGGESSESEDDG) is disordered. 3 positions are modified to phosphoserine: Ser17, Ser18, and Ser20. 6 ANK repeats span residues 46–76 (EKKEKFKKALTTGDVSLVQELLDSGIISVDA), 80–109 (YGWTPLMYAASVANAELVRVLLDRGANASF), 112–146 (DKQTILITACSAHGSEEQILKCVELLLSRNADPNV), 150–179 (RLMTPIMYAARDGHTQVVALLVASGAEVNT), 183–212 (NGYTALTWAARQGHKSIVLKLLELGANKML), and 216–245 (DGKLPSEIAKRNKHHEIFNLLSFTLNPLEG). The SAM domain maps to 274–336 (SYAEFGDLEV…KILAALKELE (63 aa)).

Interacts with DDX4, PIWIL1, RANBP9 and TDRD1.

The protein localises to the cytoplasm. Functionally, plays a central role during spermatogenesis by repressing transposable elements and preventing their mobilization, which is essential for the germline integrity. Acts via the piRNA metabolic process, which mediates the repression of transposable elements during meiosis by forming complexes composed of piRNAs and Piwi proteins and governs the methylation and subsequent repression of transposons. Its association with pi-bodies suggests a participation in the primary piRNAs metabolic process. Required prior to the pachytene stage to facilitate the production of multiple types of piRNAs, including those associated with repeats involved in the regulation of retrotransposons. May act by mediating protein-protein interactions during germ cell maturation. This is Ankyrin repeat, SAM and basic leucine zipper domain-containing protein 1 (ASZ1) from Saimiri boliviensis boliviensis (Bolivian squirrel monkey).